The primary structure comprises 381 residues: Cytosolic acyl coenzyme A thioester hydrolase (381 aa).

The HotDog ACOT-type 1 domain maps to 51 to 169 (LGHCVTMGRI…TLWYVPLSLK (119 aa)). N67 is a catalytic residue. 2 positions are modified to N6-acetyllysine: K169 and K199. Residues 225-339 (SYSQSSLIHL…FFTYVSLNQE (115 aa)) enclose the HotDog ACOT-type 2 domain. D256 is a catalytic residue. K284 carries the post-translational modification N6-acetyllysine. The segment at 342 to 381 (PMPVPQLVPETEDEKKRFEEGKGRYLQMKAKRQGHTEPQP) is disordered. Over residues 354–364 (DEKKRFEEGKG) the composition is skewed to basic and acidic residues.

As to quaternary structure, homohexamer. In terms of tissue distribution, widely expressed with highest levels in brain. High levels also found in thymus, large intestine and testis. Negligible in muscle and adipose tissue. In the central and peripheral nervous systems, displays a predominantly neuronal localization with highest expression in cell bodies and neurites.

The protein localises to the cytoplasm. Its subcellular location is the cytosol. The catalysed reaction is hexadecanoyl-CoA + H2O = hexadecanoate + CoA + H(+). The enzyme catalyses dodecanoyl-CoA + H2O = dodecanoate + CoA + H(+). It carries out the reaction tetradecanoyl-CoA + H2O = tetradecanoate + CoA + H(+). It catalyses the reaction decanoyl-CoA + H2O = decanoate + CoA + H(+). The catalysed reaction is octanoyl-CoA + H2O = octanoate + CoA + H(+). The enzyme catalyses octadecanoyl-CoA + H2O = octadecanoate + CoA + H(+). It carries out the reaction (9Z)-octadecenoyl-CoA + H2O = (9Z)-octadecenoate + CoA + H(+). It participates in lipid metabolism; fatty acid metabolism. Catalyzes the hydrolysis of acyl-CoAs into free fatty acids and coenzyme A (CoASH), regulating their respective intracellular levels. Preferentially hydrolyzes palmitoyl-CoA, but has a broad specificity acting on other fatty acyl-CoAs with chain-lengths of C8-C18. May play an important physiological function in brain. The polypeptide is Cytosolic acyl coenzyme A thioester hydrolase (Acot7) (Mus musculus (Mouse)).